We begin with the raw amino-acid sequence, 481 residues long: Glucan endo-1,3-beta-glucosidase 8 (481 aa).

The signal sequence occupies residues 1–33; it reads MSNLLALVVGFVIVIGHLGILVNGLGVNWGTMA. Residues Asn99 and Asn110 are each glycosylated (N-linked (GlcNAc...) asparagine). Catalysis depends on Glu119, which acts as the Proton donor. Asn126 and Asn131 each carry an N-linked (GlcNAc...) asparagine glycan. The Nucleophile role is filled by Glu265. Cys367 and Cys428 form a disulfide bridge. Asn409 and Asn440 each carry an N-linked (GlcNAc...) asparagine glycan. Ser455 is lipidated: GPI-anchor amidated serine. A propeptide spans 456–481 (removed in mature form); the sequence is SASSFSCSSYSLVVLIVWFLLSGMMF.

It belongs to the glycosyl hydrolase 17 family. Post-translationally, contains two additional disulfide bonds.

The protein localises to the secreted. Its subcellular location is the cell wall. It localises to the cell membrane. The enzyme catalyses Hydrolysis of (1-&gt;3)-beta-D-glucosidic linkages in (1-&gt;3)-beta-D-glucans.. This is Glucan endo-1,3-beta-glucosidase 8 from Arabidopsis thaliana (Mouse-ear cress).